A 210-amino-acid polypeptide reads, in one-letter code: Ribosomal RNA small subunit methyltransferase G (210 aa).

S-adenosyl-L-methionine is bound by residues Gly-77, Phe-82, 100-102, 128-129, and Arg-141; these read ERS and VE.

The protein belongs to the methyltransferase superfamily. RNA methyltransferase RsmG family.

Its subcellular location is the cytoplasm. In terms of biological role, specifically methylates the N7 position of a guanine in 16S rRNA. The protein is Ribosomal RNA small subunit methyltransferase G of Borrelia duttonii (strain Ly).